The primary structure comprises 344 residues: Serpentine receptor class delta-3 (344 aa).

7 helical membrane-spanning segments follow: residues 21-41, 54-74, 102-122, 142-162, 203-223, 259-279, and 287-307; these read IIGYIVNPLGILFNTLLIILI, MLHLNFALCDLFSCLAGMLAL, FLHVFVCHCLAHSQWILMISF, ICILTYLPSLLFVIVYWSDVA, FSAIVYMTIPCFPIYGVIVFF, IVPIFWLTASTFYLLALFQVV, and MPFRIMECMPMITPLISLYFV.

This sequence belongs to the nematode receptor-like protein srd family.

Its subcellular location is the membrane. This chain is Serpentine receptor class delta-3 (srd-3), found in Caenorhabditis elegans.